Consider the following 142-residue polypeptide: Large ribosomal subunit protein uL13 (142 aa).

The protein belongs to the universal ribosomal protein uL13 family. As to quaternary structure, part of the 50S ribosomal subunit.

In terms of biological role, this protein is one of the early assembly proteins of the 50S ribosomal subunit, although it is not seen to bind rRNA by itself. It is important during the early stages of 50S assembly. This is Large ribosomal subunit protein uL13 from Alkaliphilus metalliredigens (strain QYMF).